Here is a 98-residue protein sequence, read N- to C-terminus: NADH-ubiquinone oxidoreductase chain 4L (98 aa).

3 consecutive transmembrane segments (helical) span residues 1–21, 28–48, and 61–81; these read MASI…GVLI, STLL…TLLI, and LILL…LVTI.

The protein belongs to the complex I subunit 4L family. As to quaternary structure, core subunit of respiratory chain NADH dehydrogenase (Complex I) which is composed of 45 different subunits.

It is found in the mitochondrion inner membrane. The enzyme catalyses a ubiquinone + NADH + 5 H(+)(in) = a ubiquinol + NAD(+) + 4 H(+)(out). In terms of biological role, core subunit of the mitochondrial membrane respiratory chain NADH dehydrogenase (Complex I) which catalyzes electron transfer from NADH through the respiratory chain, using ubiquinone as an electron acceptor. Part of the enzyme membrane arm which is embedded in the lipid bilayer and involved in proton translocation. The chain is NADH-ubiquinone oxidoreductase chain 4L (MT-ND4L) from Thylamys elegans (Elegant fat-tailed mouse opossum).